Consider the following 196-residue polypeptide: Agamous-like MADS-box protein AGL27 (196 aa).

The MADS-box domain occupies 1–61 (MGRRKIEIKR…GKLYDSSSGD (61 aa)). Residues 80–170 (ALDLEEKIQN…ASQMGKNTLL (91 aa)) form the K-box domain. A disordered region spans residues 175–196 (ERGMFPGSSSGNKIPETLPLLN).

In terms of assembly, interacts with AGL39, AGL97 and AGL74. In terms of tissue distribution, expressed in most plant tissues, embryo, seedlings, roots, leaves, stems, inflorescence, pollen, siliques and flowers.

It is found in the nucleus. Probable transcription factor involved in the negative regulation of flowering time in both long and short days, probably through the photoperiodic and vernalization pathways. Prevents premature flowering. The protein is Agamous-like MADS-box protein AGL27 (AGL27) of Arabidopsis thaliana (Mouse-ear cress).